The primary structure comprises 158 residues: Transcriptional regulatory protein DoeX (158 aa).

Residues leucine 3–arginine 64 enclose the HTH asnC-type domain. The segment at residues lysine 22–arginine 41 is a DNA-binding region (H-T-H motif).

It is found in the cytoplasm. Functionally, acts as a transcriptional regulator. It binds DNA specifically to a fragment from the doeA promoter region. This Halomonas elongata (strain ATCC 33173 / DSM 2581 / NBRC 15536 / NCIMB 2198 / 1H9) protein is Transcriptional regulatory protein DoeX (doeX).